The primary structure comprises 152 residues: Transcriptional regulator MraZ (152 aa).

2 SpoVT-AbrB domains span residues 5–52 (TSAI…PLPE) and 81–124 (ASDC…HDTA).

This sequence belongs to the MraZ family. Forms oligomers.

It localises to the cytoplasm. The protein resides in the nucleoid. In Colwellia psychrerythraea (strain 34H / ATCC BAA-681) (Vibrio psychroerythus), this protein is Transcriptional regulator MraZ.